We begin with the raw amino-acid sequence, 188 residues long: Elongation factor P (188 aa).

This sequence belongs to the elongation factor P family.

Its subcellular location is the cytoplasm. The protein operates within protein biosynthesis; polypeptide chain elongation. Functionally, involved in peptide bond synthesis. Stimulates efficient translation and peptide-bond synthesis on native or reconstituted 70S ribosomes in vitro. Probably functions indirectly by altering the affinity of the ribosome for aminoacyl-tRNA, thus increasing their reactivity as acceptors for peptidyl transferase. The sequence is that of Elongation factor P from Nitrobacter hamburgensis (strain DSM 10229 / NCIMB 13809 / X14).